The following is a 400-amino-acid chain: Calsequestrin-2 (400 aa).

The signal sequence occupies residues 1-19 (MKRTHLFIVGVYVLSSCRA). Y282 carries the phosphotyrosine modification. N335 carries an N-linked (GlcNAc...) asparagine glycan. Residues 365–400 (VLSGKINTEDDDDEDDDDDNSDEEDNDDSDDDDDDE) form a disordered region. Positions 373–400 (EDDDDEDDDDDNSDEEDNDDSDDDDDDE) are enriched in acidic residues.

This sequence belongs to the calsequestrin family. In terms of assembly, monomer, homodimer and homooligomer. Mostly monomeric in the absence of calcium. Forms higher oligomers in a calcium-dependent manner. Dimers associate to form tetramers, that then form linear homomer chains. Interacts with ASPH and TRDN. Phosphorylation in the C-terminus, probably by CK2, moderately increases calcium buffering capacity. Post-translationally, N-glycosylated.

Its subcellular location is the sarcoplasmic reticulum lumen. In terms of biological role, calsequestrin is a high-capacity, moderate affinity, calcium-binding protein and thus acts as an internal calcium store in muscle. Calcium ions are bound by clusters of acidic residues at the protein surface, especially at the interface between subunits. Can bind around 60 Ca(2+) ions. Regulates the release of lumenal Ca(2+) via the calcium release channel RYR2; this plays an important role in triggering muscle contraction. Plays a role in excitation-contraction coupling in the heart and in regulating the rate of heart beats. This Pongo abelii (Sumatran orangutan) protein is Calsequestrin-2 (CASQ2).